The primary structure comprises 192 residues: BON1-associated protein 1 (192 aa).

In terms of domain architecture, C2 spans 1-119; that stretch reads MIYFGRSIDN…RYSPEGHLNF (119 aa).

In terms of assembly, interacts with BON1 (via VWA domain), BON2 and BON3. As to expression, expressed in roots, leaves, stems and flowers.

The protein resides in the membrane. Negative regulator of cell death and defense responses. Exhibits calcium-dependent phospholipid binding properties. This chain is BON1-associated protein 1 (BAP1), found in Arabidopsis thaliana (Mouse-ear cress).